A 282-amino-acid polypeptide reads, in one-letter code: GDT1-like protein 4 (282 aa).

The first 26 residues, 1-26 (MARRVSTTRLLLLLLLVAAAAAAAAA), serve as a signal peptide directing secretion. The next 6 helical transmembrane spans lie at 67–87 (AGLG…VSEI), 106–126 (TVLS…TGLG), 138–158 (TNSA…YIAW), 189–209 (IFSR…FLAE), 227–247 (AVGV…FAVV), and 259–279 (GTVA…SYFY).

The protein belongs to the GDT1 family.

It is found in the membrane. The protein is GDT1-like protein 4 of Oryza sativa subsp. japonica (Rice).